The chain runs to 105 residues: Met repressor (105 aa).

It belongs to the MetJ family. In terms of assembly, homodimer.

Its subcellular location is the cytoplasm. Its function is as follows. This regulatory protein, when combined with SAM (S-adenosylmethionine) represses the expression of the methionine regulon and of enzymes involved in SAM synthesis. This Yersinia enterocolitica serotype O:8 / biotype 1B (strain NCTC 13174 / 8081) protein is Met repressor.